The sequence spans 572 residues: Urease subunit alpha (572 aa).

A Urease domain is found at 134–572 (GGIDSHIHFI…LPLTQRYFLF (439 aa)). Residues His-139, His-141, and Lys-222 each coordinate Ni(2+). The residue at position 222 (Lys-222) is an N6-carboxylysine. His-224 contributes to the substrate binding site. His-251 and His-277 together coordinate Ni(2+). His-325 serves as the catalytic Proton donor. Asp-365 lines the Ni(2+) pocket.

This sequence belongs to the metallo-dependent hydrolases superfamily. Urease alpha subunit family. Heterotrimer of UreA (gamma), UreB (beta) and UreC (alpha) subunits. Three heterotrimers associate to form the active enzyme. It depends on Ni cation as a cofactor. Post-translationally, carboxylation allows a single lysine to coordinate two nickel ions.

It is found in the cytoplasm. The catalysed reaction is urea + 2 H2O + H(+) = hydrogencarbonate + 2 NH4(+). The protein operates within nitrogen metabolism; urea degradation; CO(2) and NH(3) from urea (urease route): step 1/1. The protein is Urease subunit alpha of Variovorax paradoxus (strain S110).